The sequence spans 323 residues: Elongation factor P--(R)-beta-lysine ligase (323 aa).

Position 76 to 78 (76 to 78) interacts with substrate; it reads SPE. ATP is bound by residues 100 to 102 and Asn109; that span reads RNE. Tyr118 is a binding site for substrate. Residue 242–243 participates in ATP binding; it reads EL. Residue Glu249 participates in substrate binding. Gly298 is a binding site for ATP.

The protein belongs to the class-II aminoacyl-tRNA synthetase family. EpmA subfamily. As to quaternary structure, homodimer.

The catalysed reaction is D-beta-lysine + L-lysyl-[protein] + ATP = N(6)-((3R)-3,6-diaminohexanoyl)-L-lysyl-[protein] + AMP + diphosphate + H(+). Its function is as follows. With EpmB is involved in the beta-lysylation step of the post-translational modification of translation elongation factor P (EF-P). Catalyzes the ATP-dependent activation of (R)-beta-lysine produced by EpmB, forming a lysyl-adenylate, from which the beta-lysyl moiety is then transferred to the epsilon-amino group of a conserved specific lysine residue in EF-P. The chain is Elongation factor P--(R)-beta-lysine ligase from Haemophilus influenzae (strain PittGG).